Consider the following 173-residue polypeptide: Disulfide bond formation protein B (173 aa).

Over methionine 1–glutamine 11 the chain is Cytoplasmic. Residues cysteine 12 to phenylalanine 28 traverse the membrane as a helical segment. Residues leucine 29 to isoleucine 46 are Periplasmic-facing. Cysteine 38 and cysteine 41 are joined by a disulfide. The chain crosses the membrane as a helical span at residues alanine 47 to serine 63. Residues serine 64–lysine 70 are Cytoplasmic-facing. A helical transmembrane segment spans residues alanine 71 to glycine 88. Residues arginine 89–methionine 145 lie on the Periplasmic side of the membrane. Cysteine 104 and cysteine 131 are oxidised to a cystine. A helical transmembrane segment spans residues tryptophan 146–lysine 164. Residues alanine 165–serine 173 lie on the Cytoplasmic side of the membrane.

This sequence belongs to the DsbB family.

The protein localises to the cell inner membrane. Required for disulfide bond formation in some periplasmic proteins. Acts by oxidizing the DsbA protein. The sequence is that of Disulfide bond formation protein B from Xylella fastidiosa (strain 9a5c).